The sequence spans 942 residues: DNA polymerase I (942 aa).

In terms of domain architecture, 5'-3' exonuclease spans 177–269; that stretch reads EPDQLADLRG…LEAARIGVYD (93 aa). Positions 340-522 constitute a 3'-5' exonuclease domain; that stretch reads TIVRDATALA…LTERLQRQLE (183 aa).

Belongs to the DNA polymerase type-A family. As to quaternary structure, single-chain monomer with multiple functions.

It catalyses the reaction DNA(n) + a 2'-deoxyribonucleoside 5'-triphosphate = DNA(n+1) + diphosphate. In terms of biological role, in addition to polymerase activity, this DNA polymerase exhibits 3'-5' and 5'-3' exonuclease activity. The polypeptide is DNA polymerase I (polA) (Chloroflexus aurantiacus (strain ATCC 29366 / DSM 635 / J-10-fl)).